A 183-amino-acid chain; its full sequence is Dermatopontin (183 aa).

Q1 carries the pyrrolidone carboxylic acid modification. Position 5 is a sulfotyrosine (Y5). 4 consecutive repeat copies span residues 8–61, 52–57, 62–117, and 107–112. Residues 8 to 117 are 2 X 53-55 AA tandem repeats; the sequence is PYQQYHDYSD…REWQFYCCRY (110 aa). Cystine bridges form between C32/C59, C72/C114, C88/C115, C121/C178, and C125/C171. Residues 52–168 form a 3 X 6 AA tandem repeats of D-R-[EQ]-W-[NQK]-[FY] region; it reads DRQWNYACMP…AVERDRQWKF (117 aa). 4 positions are modified to sulfotyrosine: Y144, Y146, Y148, and Y149. Residues 163–168 form a 2-3 repeat; that stretch reads DRQWKF. Y176 carries the sulfotyrosine modification.

It belongs to the dermatopontin family. In terms of assembly, interacts with TGFB1, DCN and collagen. Sulfated on tyrosine residue(s). Detected in skin, skeletal muscle, heart, lung, articular cartilage, long bone and calvaria. Smaller amounts detected in kidney. Not detected in brain, liver or spleen.

It localises to the secreted. Its subcellular location is the extracellular space. The protein localises to the extracellular matrix. Its function is as follows. Seems to mediate adhesion by cell surface integrin binding. May serve as a communication link between the dermal fibroblast cell surface and its extracellular matrix environment. Enhances TGFB1 activity. Inhibits cell proliferation. Accelerates collagen fibril formation, and stabilizes collagen fibrils against low-temperature dissociation. This Sus scrofa (Pig) protein is Dermatopontin (DPT).